Consider the following 1114-residue polypeptide: Hephaestin-like protein (1114 aa).

A signal peptide spans 1–26 (MMDRSNAAFVLTACFIFSQLICHVAA). 6 consecutive Plastocyanin-like domains span residues 27–210 (ITRT…LICR), 218–365 (QQSG…VTKC), 380–562 (KRTY…LLTC), 572–719 (TRKD…VNTC), 730–915 (KTRD…LIIC), and 924–1114 (TEER…LLKA). Residues 27–1091 (ITRTYYIAAV…KTTPKPITAA (1065 aa)) are Extracellular-facing. Asparagine 121 is a glycosylation site (N-linked (GlcNAc...) asparagine). 4 residues coordinate Cu cation: histidine 129, histidine 131, histidine 189, and histidine 191. Cysteine 183 and cysteine 209 form a disulfide bridge. A glycan (N-linked (GlcNAc...) asparagine) is linked at asparagine 236. Cysteine 284 and cysteine 365 are joined by a disulfide. Histidine 303, cysteine 346, and histidine 351 together coordinate Cu cation. Residues asparagine 361, asparagine 478, and asparagine 489 are each glycosylated (N-linked (GlcNAc...) asparagine). Intrachain disulfides connect cysteine 536–cysteine 562 and cysteine 638–cysteine 719. Histidine 657, cysteine 700, histidine 705, and methionine 710 together coordinate Cu cation. Residue asparagine 831 is glycosylated (N-linked (GlcNAc...) asparagine). Cysteine 889 and cysteine 915 are joined by a disulfide. A glycan (N-linked (GlcNAc...) asparagine) is linked at asparagine 944. 8 residues coordinate Cu cation: histidine 1014, histidine 1017, histidine 1019, histidine 1059, cysteine 1060, histidine 1061, histidine 1065, and methionine 1070. Residues 1092–1112 (SSFVTSSIFIYLSFPVLAMLL) form a helical membrane-spanning segment. Residues 1113–1114 (KA) are Cytoplasmic-facing.

This sequence belongs to the multicopper oxidase family. Requires Cu cation as cofactor. As to expression, component of the acid-insoluble and acid-soluble organic matrix of the aragonitic skeleton (at protein level).

It is found in the membrane. In terms of biological role, may function as a ferroxidase and may be involved in copper transport and homeostasis. The chain is Hephaestin-like protein from Acropora millepora (Staghorn coral).